Reading from the N-terminus, the 371-residue chain is Glycosyltransferase 8 domain-containing protein 1 (371 aa).

The Cytoplasmic segment spans residues 1 to 5 (MSFRK). Residues 6–26 (VTIIIWALAVILFLLALHHNF) traverse the membrane as a helical; Signal-anchor for type II membrane protein segment. Residues 27–371 (LSLSSLLRND…RRHMDTSNIK (345 aa)) are Lumenal-facing. N257 carries an N-linked (GlcNAc...) asparagine glycan.

This sequence belongs to the glycosyltransferase 8 family.

It is found in the membrane. The chain is Glycosyltransferase 8 domain-containing protein 1 (Glt8d1) from Rattus norvegicus (Rat).